Reading from the N-terminus, the 491-residue chain is Alpha-2-antiplasmin (491 aa).

Residues 1 to 27 (MALLRGLLVLSLSCLQGPCFTFSPVSA) form the signal peptide. Positions 28–39 (VDLPGQQPVSEQ) are excised as a propeptide. C70 and C143 form a disulfide bridge. N-linked (GlcNAc...) asparagine glycosylation is found at N126, N295, N309, and N316. The disordered stretch occupies residues 439–491 (SALPQLQEQRDSPDNRLIGQNDKADFHGGKTFGPDLKLAPRMEEDYPQFSSPK). Residue Y484 is modified to Sulfotyrosine.

This sequence belongs to the serpin family. In terms of assembly, forms protease inhibiting heterodimer with TMPRSS7. Proteolytically cleaved at Pro-35 by both the prolyl endopeptidase FAP form and antiplasmin-cleaving enzyme FAP soluble form to generate mature alpha-2-antiplasmin. Expressed by the liver and secreted in plasma.

It localises to the secreted. Its function is as follows. Serine protease inhibitor. The major targets of this inhibitor are plasmin and trypsin, but it also inactivates matriptase-3/TMPRSS7 and chymotrypsin. The chain is Alpha-2-antiplasmin (Serpinf2) from Mus musculus (Mouse).